A 206-amino-acid chain; its full sequence is Cytidylate kinase (206 aa).

Residue 7–15 participates in ATP binding; the sequence is GPAASGKGT.

It belongs to the cytidylate kinase family. Type 1 subfamily.

The protein localises to the cytoplasm. The catalysed reaction is CMP + ATP = CDP + ADP. It carries out the reaction dCMP + ATP = dCDP + ADP. In Azorhizobium caulinodans (strain ATCC 43989 / DSM 5975 / JCM 20966 / LMG 6465 / NBRC 14845 / NCIMB 13405 / ORS 571), this protein is Cytidylate kinase.